The sequence spans 331 residues: Eukaryotic translation initiation factor 2 subunit 2 (331 aa).

Disordered regions lie at residues 1-75 (MSGD…DLNF) and 97-120 (AIKD…LDIM). Residue S2 is modified to N-acetylserine. S2 and S13 each carry phosphoserine. Residues 13-22 (SKKKKKKKKP) show a composition bias toward basic residues. Residue T36 is modified to Phosphothreonine. A compositionally biased stretch (basic and acidic residues) spans 40–51 (ETKEVEPEPTEE). S67 carries the phosphoserine modification. A Glycyl lysine isopeptide (Lys-Gly) (interchain with G-Cter in SUMO2) cross-link involves residue K102. Phosphoserine is present on S105. Residues 106-118 (DAQEPAEPEDDLD) are compositionally biased toward acidic residues. S158 and S216 each carry phosphoserine. N6-acetyllysine occurs at positions 263 and 291. A C4-type zinc finger spans residues 279 to 303 (CHTCRSPDTILQKDTRLYFLQCETC).

It belongs to the eIF-2-beta/eIF-5 family. Eukaryotic translation initiation factor 2 eIF2 is a heterotrimeric complex composed of an alpha (EIF2S1), a beta (EIF2S2) and a gamma (EIF2S3) chain. eIF2 is member of the 43S pre-initiation complex (43S PIC). eIF2 forms a complex with at least CELF1/CUGBP1, CALR, CALR3, EIF2S1, EIF2S2, HSP90B1 and HSPA5. Interacts with BZW2/5MP1. Interacts with EIF5.

The protein resides in the cytoplasm. It is found in the cytosol. Its function is as follows. Component of the eIF2 complex that functions in the early steps of protein synthesis by forming a ternary complex with GTP and initiator tRNA. This complex binds to a 40S ribosomal subunit, followed by mRNA binding to form the 43S pre-initiation complex (43S PIC). Junction of the 60S ribosomal subunit to form the 80S initiation complex is preceded by hydrolysis of the GTP bound to eIF2 and release of an eIF2-GDP binary complex. In order for eIF2 to recycle and catalyze another round of initiation, the GDP bound to eIF2 must exchange with GTP by way of a reaction catalyzed by eIF2B. The polypeptide is Eukaryotic translation initiation factor 2 subunit 2 (Eif2s2) (Mus musculus (Mouse)).